The primary structure comprises 639 residues: UvrABC system protein C (639 aa).

The region spanning 20-97 (ERSGVYRMFD…IKKFQPKFNI (78 aa)) is the GIY-YIG domain. A UVR domain is found at 207 to 242 (KELQENLSRKMEELSSQMRFEEAAEIRDRIKALSYV).

The protein belongs to the UvrC family. Interacts with UvrB in an incision complex.

The protein resides in the cytoplasm. Its function is as follows. The UvrABC repair system catalyzes the recognition and processing of DNA lesions. UvrC both incises the 5' and 3' sides of the lesion. The N-terminal half is responsible for the 3' incision and the C-terminal half is responsible for the 5' incision. The polypeptide is UvrABC system protein C (Rickettsia peacockii (strain Rustic)).